Reading from the N-terminus, the 239-residue chain is MAPYRLDVISLAPQAFAPLPEVGVIGRAFGAKIAELHLHNPRDHAIDRHRKVDDVPYGGGAGMVLKPEPVFAAFESVPVCSRRRVLLMSPQGQPLRQVDLQRWSQDYDQLVFLCGHYEGFDERIRSLADEEVSMGDFVLTGGELPAMTIINGVVRLLPGTVGTPESLVEESHSDLLLEHSHYTRPADFRGMTVPDVLRSGDHGAVALWRQQQREQRTQERRPDLWNRWQQIQNPTPPAP.

S-adenosyl-L-methionine contacts are provided by residues Gly-115 and 134–139 (MGDFVL). The segment at 210 to 239 (QQQREQRTQERRPDLWNRWQQIQNPTPPAP) is disordered. Positions 211–224 (QQREQRTQERRPDL) are enriched in basic and acidic residues.

This sequence belongs to the RNA methyltransferase TrmD family. As to quaternary structure, homodimer.

The protein resides in the cytoplasm. The enzyme catalyses guanosine(37) in tRNA + S-adenosyl-L-methionine = N(1)-methylguanosine(37) in tRNA + S-adenosyl-L-homocysteine + H(+). Functionally, specifically methylates guanosine-37 in various tRNAs. The sequence is that of tRNA (guanine-N(1)-)-methyltransferase from Synechococcus sp. (strain CC9311).